A 391-amino-acid chain; its full sequence is MNVLPAASQPLNQSVTLCVDAPMRLDSGLELGPLTVAYQTIGRLNAERTNAILICHALTGDQHVIGPHPVTGRPGWWETLVGPGKTIDTDRYFIICSNVLGGCLGTTGPKEINPATGKPWGLGFPVITIGDMVRAQALLLDHLGIERLFCAIGGSMGAMQVLQWAVSYPERVRAVVPIAGSWRHSAQNIAFHEVGRQAIMADPDWNGGDYLNQGTVPRRGLAVARMTAHITYLSEPALQSKFGRKLQDRASITYGFDADFQVESYLRHQGANFVKRFDANSYLYITRAMDYFDLAAEHDGVLARAFQGTKVRFCVVSFTSDWLFPTAESRAVVRAMNAAAADVSFVEVTTDKGHDAFLLDEPEFHDTLQGFLDGAADMFGLPRGLFSGIRP.

In terms of domain architecture, AB hydrolase-1 spans 50–360 (NAILICHALT…DKGHDAFLLD (311 aa)). Residue Ser-155 is the Nucleophile of the active site. Substrate is bound at residue Arg-225. Residues Asp-321 and His-354 contribute to the active site. Position 355 (Asp-355) interacts with substrate.

The protein belongs to the AB hydrolase superfamily. MetX family. Homodimer.

It is found in the cytoplasm. The enzyme catalyses L-homoserine + acetyl-CoA = O-acetyl-L-homoserine + CoA. Its pathway is amino-acid biosynthesis; L-methionine biosynthesis via de novo pathway; O-acetyl-L-homoserine from L-homoserine: step 1/1. Functionally, transfers an acetyl group from acetyl-CoA to L-homoserine, forming acetyl-L-homoserine. This is Homoserine O-acetyltransferase from Rhodospirillum rubrum (strain ATCC 11170 / ATH 1.1.1 / DSM 467 / LMG 4362 / NCIMB 8255 / S1).